Here is a 108-residue protein sequence, read N- to C-terminus: Tetrahydromethanopterin S-methyltransferase subunit B (108 aa).

Residues 81–101 (FFGFWISLSILTLGLILVIGL) traverse the membrane as a helical segment.

It belongs to the MtrB family. As to quaternary structure, the complex is composed of 8 subunits; MtrA, MtrB, MtrC, MtrD, MtrE, MtrF, MtrG and MtrH.

The protein resides in the cell membrane. It catalyses the reaction 5-methyl-5,6,7,8-tetrahydromethanopterin + coenzyme M + 2 Na(+)(in) = 5,6,7,8-tetrahydromethanopterin + methyl-coenzyme M + 2 Na(+)(out). It functions in the pathway one-carbon metabolism; methanogenesis from CO(2); methyl-coenzyme M from 5,10-methylene-5,6,7,8-tetrahydromethanopterin: step 2/2. In terms of biological role, part of a complex that catalyzes the formation of methyl-coenzyme M and tetrahydromethanopterin from coenzyme M and methyl-tetrahydromethanopterin. This is an energy-conserving, sodium-ion translocating step. This Methanococcus aeolicus (strain ATCC BAA-1280 / DSM 17508 / OCM 812 / Nankai-3) protein is Tetrahydromethanopterin S-methyltransferase subunit B.